The primary structure comprises 822 residues: AP-1 complex subunit gamma-1 (822 aa).

The disordered stretch occupies residues 597–628 (EIVQTNGETEPAPLETKPPPSGPQPTSQANDL). Positions 702–817 (AGIPSITAYS…QDLAEVNNFP (116 aa)) constitute a GAE domain.

The protein belongs to the adaptor complexes large subunit family. Adaptor protein complex 1 (AP-1) is a heterotetramer composed of two large adaptins (gamma-type subunit AP1G1 and beta-type subunit AP1B1), a medium adaptin (mu-type subunit AP1M1 or AP1M2) and a small adaptin (sigma-type subunit AP1S1 or AP1S2 or AP1S3). Interacts (via GAE domain) with RABEP1. Interacts with SYNRG/gamma-synergin. Interacts with EPS15. Interacts (via GAE domain) with AP1AR (via coiled-coil domain). Interacts with CLN3 (via dileucine motif); this interaction facilitates lysosomal targeting. Interacts (via GAE domain) with AFTPH/aftiphilin; the interaction is required to recruit AFTPH/aftiphilin to the perinuclear region of the cell. As to expression, widely expressed.

It localises to the golgi apparatus. The protein localises to the cytoplasmic vesicle. The protein resides in the clathrin-coated vesicle membrane. It is found in the cytoplasm. Its subcellular location is the perinuclear region. It localises to the clathrin-coated vesicle. The protein localises to the membrane. The protein resides in the clathrin-coated pit. Functionally, subunit of clathrin-associated adaptor protein complex 1 that plays a role in protein sorting in the late-Golgi/trans-Golgi network (TGN) and/or endosomes. The AP complexes mediate both the recruitment of clathrin to membranes and the recognition of sorting signals within the cytosolic tails of transmembrane cargo molecules. In association with AFTPH/aftiphilin in the aftiphilin/p200/gamma-synergin complex, involved in the trafficking of transferrin from early to recycling endosomes, and the membrane trafficking of furin and the lysosomal enzyme cathepsin D between the trans-Golgi network (TGN) and endosomes. This is AP-1 complex subunit gamma-1 (AP1G1) from Homo sapiens (Human).